Here is a 283-residue protein sequence, read N- to C-terminus: MEMO1 family protein MK0963 (283 aa).

Belongs to the MEMO1 family.

The sequence is that of MEMO1 family protein MK0963 from Methanopyrus kandleri (strain AV19 / DSM 6324 / JCM 9639 / NBRC 100938).